The sequence spans 611 residues: Virulence metalloprotease (611 aa).

The first 25 residues, 1 to 25, serve as a signal peptide directing secretion; sequence MKKVQRQMKWLFLAASISAALPVSA. The propeptide occupies 26–199; that stretch reads AKMVQVDDPS…VLQTWEGLNH (174 aa). Position 346 (His-346) interacts with Zn(2+). Glu-347 is a catalytic residue. His-350 and Glu-370 together coordinate Zn(2+). His-429 acts as the Proton donor in catalysis.

The protein belongs to the peptidase M4 family. The cofactor is Ca(2+). It depends on Zn(2+) as a cofactor. In terms of processing, seems to be more extensively processed.

The protein localises to the secreted. Functionally, extracellular zinc metalloprotease involved in the virulence mechanism of V.anguillarum. The protein is Virulence metalloprotease (empA) of Vibrio anguillarum (Listonella anguillarum).